The chain runs to 337 residues: MISLKSIVDKLYNLEDLSYQESYQLFDYFIKGQIELPLQTSILIALKLKKETSIEIAAAVEALFDNTKEFPKIKGDLAGIVGTGGDGFNTINISTTAAIVAATAGYKVAKHGGRSVSSKSGSFDLLESFGVNIELAPDQTKQCLELYNLGFLFAPFYSDGFRHIKEARTILKTRTIFNILGPLINPARPNKVVIGVYSKDLILPMAKTLVNLGIDRAVVVYGSGLDEVAIHDDTYVAEIQNNQIIEYKVSPVDFGIYTYAIKDLEGGLPEQNREIIKQILLGKGKEAHNAAVAVNVAMLMRLYDKDDLKQNTQEVLEIIKSGKCFNTLQQVINYSNK.

Residues G82, 85 to 86 (GD), T90, 92 to 95 (NIST), 110 to 118 (KHGGRSVSS), and S122 contribute to the 5-phospho-alpha-D-ribose 1-diphosphate site. G82 lines the anthranilate pocket. Residue S94 participates in Mg(2+) binding. R168 lines the anthranilate pocket. 2 residues coordinate Mg(2+): D226 and E227.

It belongs to the anthranilate phosphoribosyltransferase family. As to quaternary structure, homodimer. Requires Mg(2+) as cofactor.

The catalysed reaction is N-(5-phospho-beta-D-ribosyl)anthranilate + diphosphate = 5-phospho-alpha-D-ribose 1-diphosphate + anthranilate. It functions in the pathway amino-acid biosynthesis; L-tryptophan biosynthesis; L-tryptophan from chorismate: step 2/5. Its function is as follows. Catalyzes the transfer of the phosphoribosyl group of 5-phosphorylribose-1-pyrophosphate (PRPP) to anthranilate to yield N-(5'-phosphoribosyl)-anthranilate (PRA). In Francisella tularensis subsp. holarctica (strain OSU18), this protein is Anthranilate phosphoribosyltransferase.